The following is a 440-amino-acid chain: Asparagine--tRNA ligase (440 aa).

Belongs to the class-II aminoacyl-tRNA synthetase family. As to quaternary structure, homodimer.

It localises to the cytoplasm. The enzyme catalyses tRNA(Asn) + L-asparagine + ATP = L-asparaginyl-tRNA(Asn) + AMP + diphosphate + H(+). This is Asparagine--tRNA ligase from Roseiflexus sp. (strain RS-1).